The primary structure comprises 354 residues: Guanine nucleotide-binding protein G(i) subunit alpha-1 (354 aa).

G2 is lipidated: N-myristoyl glycine. The S-palmitoyl cysteine moiety is linked to residue C3. One can recognise a G-alpha domain in the interval 32–354; it reads REVKLLLLGA…KNNLKDCGLF (323 aa). The tract at residues 35–48 is G1 motif; sequence KLLLLGAGESGKST. Residues 43 to 48, 150 to 151, and 175 to 178 contribute to the GTP site; these read ESGKST, DS, and LRTR. Residue S47 participates in Mg(2+) binding. The G2 motif stretch occupies residues 173-181; sequence DVLRTRVKT. T181 provides a ligand contact to Mg(2+). Positions 196-205 are G3 motif; the sequence is FKMFDVGGQR. Residues 200-204, 269-272, and A326 each bind GTP; these read DVGGQ and NKKD. The segment at 265–272 is G4 motif; sequence ILFLNKKD. Positions 324 to 329 are G5 motif; sequence TCATDT.

This sequence belongs to the G-alpha family. G(i/o/t/z) subfamily. Heterotrimeric G proteins are composed of 3 units; alpha, beta and gamma. The alpha chain contains the guanine nucleotide binding site. Part of a spindle orientation complex. Identified in complex with the beta subunit GNB1 and the gamma subunit GNG1. Identified in complex with the beta subunit GNB1 and the gamma subunit GNG2. GTP binding causes dissociation of the heterotrimer, liberating the individual subunits so that they can interact with downstream effector proteins. In terms of processing, myristoylation at Gly-2 is required for membrane anchoring before palmitoylation. Palmitoylation at Cys-3 varies with membrane lipid composition.

It localises to the nucleus. The protein resides in the cytoplasm. Its subcellular location is the cell membrane. The protein localises to the cytoskeleton. It is found in the microtubule organizing center. It localises to the centrosome. The protein resides in the cell cortex. Its subcellular location is the membrane. It catalyses the reaction GTP + H2O = GDP + phosphate + H(+). Its function is as follows. Guanine nucleotide-binding proteins (G proteins) function as transducers downstream of G protein-coupled receptors (GPCRs) in numerous signaling cascades. The alpha chain contains the guanine nucleotide binding site and alternates between an active, GTP-bound state and an inactive, GDP-bound state. Signaling by an activated GPCR promotes GDP release and GTP binding. The alpha subunit has a low GTPase activity that converts bound GTP to GDP, thereby terminating the signal. Both GDP release and GTP hydrolysis are modulated by numerous regulatory proteins. Signaling is mediated via effector proteins, such as adenylate cyclase. Inhibits adenylate cyclase activity of ADCY1, ADCY5 and ADCY6, leading to decreased intracellular cAMP levels. Required for cortical dynein-dynactin complex recruitment during metaphase. This chain is Guanine nucleotide-binding protein G(i) subunit alpha-1 (GNAI1), found in Gallus gallus (Chicken).